Consider the following 393-residue polypeptide: Synaptic vesicle membrane protein VAT-1 homolog (393 aa).

The segment at 1–40 is disordered; the sequence is MSDEREVAEAATGEDASSPPPKTEAASDPQHPAASEGAAA. Serine 2 is subject to N-acetylserine. 5 positions are modified to phosphoserine: serine 2, serine 18, serine 27, serine 35, and serine 44.

This sequence belongs to the zinc-containing alcohol dehydrogenase family. Quinone oxidoreductase subfamily. In terms of tissue distribution, expressed in brain. Also expressed in glioblastoma cells.

The protein localises to the cytoplasm. The protein resides in the mitochondrion outer membrane. Functionally, possesses ATPase activity. Plays a part in calcium-regulated keratinocyte activation in epidermal repair mechanisms. Has no effect on cell proliferation. Negatively regulates mitochondrial fusion in cooperation with mitofusin proteins (MFN1-2). This Homo sapiens (Human) protein is Synaptic vesicle membrane protein VAT-1 homolog (VAT1).